Reading from the N-terminus, the 225-residue chain is MAIKDWPQGEGPRDKLLQQGAARLSDAELLAVLIRNGISGQNALTTGRLLLSHFGGLRSLMTATEDKVCQIPGVGPVKYAQLQAAAEISKRISRENLQRGQILTNPDLTRDYLMRQLADRSYEVFALLLLDSQHRVIQFVELFRGTIDSASVYPREVVSLVLEKRAAAVIICHNHPSGIAEPSQADRRITERLKNALATIDVSLLDHMVVGDFEIVSFAERGWLN.

The region spanning 102–224 (ILTNPDLTRD…IVSFAERGWL (123 aa)) is the MPN domain. The Zn(2+) site is built by histidine 173, histidine 175, and aspartate 186. The short motif at 173–186 (HNHPSGIAEPSQAD) is the JAMM motif element.

Belongs to the UPF0758 family.

This is UPF0758 protein Sden_0326 from Shewanella denitrificans (strain OS217 / ATCC BAA-1090 / DSM 15013).